The following is a 120-amino-acid chain: MFLIYEYDIFWAFLIISSVIPILAFLISGVLSPISKGPEKLSSYESGIEPIGDAWLQFRIRYYMFALVFVVFDVETVFLYPWAMSFDVLGLSVFIEALIFVLILIVGSVYAWRKGALEWS.

The next 3 membrane-spanning stretches (helical) occupy residues 9–29 (IFWAFLIISSVIPILAFLISG), 64–84 (MFALVFVVFDVETVFLYPWAM), and 88–108 (VLGLSVFIEALIFVLILIVGS).

This sequence belongs to the complex I subunit 3 family. In terms of assembly, NDH is composed of at least 16 different subunits, 5 of which are encoded in the nucleus.

It is found in the plastid. Its subcellular location is the chloroplast thylakoid membrane. The enzyme catalyses a plastoquinone + NADH + (n+1) H(+)(in) = a plastoquinol + NAD(+) + n H(+)(out). It catalyses the reaction a plastoquinone + NADPH + (n+1) H(+)(in) = a plastoquinol + NADP(+) + n H(+)(out). In terms of biological role, NDH shuttles electrons from NAD(P)H:plastoquinone, via FMN and iron-sulfur (Fe-S) centers, to quinones in the photosynthetic chain and possibly in a chloroplast respiratory chain. The immediate electron acceptor for the enzyme in this species is believed to be plastoquinone. Couples the redox reaction to proton translocation, and thus conserves the redox energy in a proton gradient. This chain is NAD(P)H-quinone oxidoreductase subunit 3, chloroplastic, found in Manihot esculenta (Cassava).